We begin with the raw amino-acid sequence, 966 residues long: DNA mismatch repair protein MutS (966 aa).

Residue 709–716 (GPNMAGKS) participates in ATP binding. The segment at 894-914 (EGQRPPSSPAQPPAPPAPVVV) is disordered. The span at 899-912 (PSSPAQPPAPPAPV) shows a compositional bias: pro residues.

This sequence belongs to the DNA mismatch repair MutS family.

This protein is involved in the repair of mismatches in DNA. It is possible that it carries out the mismatch recognition step. This protein has a weak ATPase activity. This is DNA mismatch repair protein MutS from Chloroflexus aurantiacus (strain ATCC 29366 / DSM 635 / J-10-fl).